We begin with the raw amino-acid sequence, 357 residues long: AA9 family lytic polysaccharide monooxygenase B (357 aa).

A signal peptide spans 1-18 (MKFSSVLALAASAKLVAS). Residues histidine 19 and histidine 101 each contribute to the Cu(2+) site. Residues 19–234 (HATVFAVWIN…IPGPAVWDGA (216 aa)) are catalytic. A disulfide bridge links cysteine 61 with cysteine 182. O2 is bound by residues histidine 168 and glutamine 177. Residue tyrosine 179 participates in Cu(2+) binding. Residues 235–318 (SSGSGSSGSG…SAAPTGGTGT (84 aa)) are ser/Thr-rich linker. The disordered stretch occupies residues 292 to 317 (SVRPTTSAAPTTSAPTSSAAPTGGTG). Residues 295-313 (PTTSAAPTTSAPTSSAAPT) show a composition bias toward low complexity. One can recognise a CBM1 domain in the interval 319–355 (GSIQIYQQCGGMNYKGATGCASGLTCKQWNPYYHQCV).

This sequence belongs to the polysaccharide monooxygenase AA9 family. It depends on Cu(2+) as a cofactor.

It localises to the secreted. The enzyme catalyses [(1-&gt;4)-beta-D-glucosyl]n+m + reduced acceptor + O2 = 4-dehydro-beta-D-glucosyl-[(1-&gt;4)-beta-D-glucosyl]n-1 + [(1-&gt;4)-beta-D-glucosyl]m + acceptor + H2O.. In terms of biological role, lytic polysaccharide monooxygenase (LPMO) that depolymerizes crystalline and amorphous polysaccharides via the oxidation of scissile alpha- or beta-(1-4)-glycosidic bonds, yielding C4 oxidation products. Catalysis by LPMOs requires the reduction of the active-site copper from Cu(II) to Cu(I) by a reducing agent and H(2)O(2) or O(2) as a cosubstrate. Active on carboxymethylcellulose (CMC), hydroxyethylcellulose (HEC) and beta-glucan. Also active on soluble cellohexaose, a property that is restricted to only a few characterized LPMOs. The chain is AA9 family lytic polysaccharide monooxygenase B from Emericella nidulans (strain FGSC A4 / ATCC 38163 / CBS 112.46 / NRRL 194 / M139) (Aspergillus nidulans).